Consider the following 206-residue polypeptide: Large ribosomal subunit protein uL4 (206 aa).

Residues 45 to 76 are disordered; the sequence is RQGTQSAKTRTEVSGGGIKPWRQKGTGRARQG.

This sequence belongs to the universal ribosomal protein uL4 family. As to quaternary structure, part of the 50S ribosomal subunit.

Its function is as follows. One of the primary rRNA binding proteins, this protein initially binds near the 5'-end of the 23S rRNA. It is important during the early stages of 50S assembly. It makes multiple contacts with different domains of the 23S rRNA in the assembled 50S subunit and ribosome. In terms of biological role, forms part of the polypeptide exit tunnel. The protein is Large ribosomal subunit protein uL4 of Clostridium acetobutylicum (strain ATCC 824 / DSM 792 / JCM 1419 / IAM 19013 / LMG 5710 / NBRC 13948 / NRRL B-527 / VKM B-1787 / 2291 / W).